Consider the following 211-residue polypeptide: FMN-dependent NADH:quinone oxidoreductase 2 (211 aa).

Residue 102–105 coordinates FMN; sequence MWNF.

This sequence belongs to the azoreductase type 1 family. As to quaternary structure, homodimer. FMN is required as a cofactor.

The enzyme catalyses 2 a quinone + NADH + H(+) = 2 a 1,4-benzosemiquinone + NAD(+). The catalysed reaction is N,N-dimethyl-1,4-phenylenediamine + anthranilate + 2 NAD(+) = 2-(4-dimethylaminophenyl)diazenylbenzoate + 2 NADH + 2 H(+). Functionally, quinone reductase that provides resistance to thiol-specific stress caused by electrophilic quinones. Also exhibits azoreductase activity. Catalyzes the reductive cleavage of the azo bond in aromatic azo compounds to the corresponding amines. This Bacillus thuringiensis subsp. konkukian (strain 97-27) protein is FMN-dependent NADH:quinone oxidoreductase 2.